Reading from the N-terminus, the 179-residue chain is Large ribosomal subunit protein uL5 (179 aa).

This sequence belongs to the universal ribosomal protein uL5 family. In terms of assembly, part of the 50S ribosomal subunit; part of the 5S rRNA/L5/L18/L25 subcomplex. Contacts the 5S rRNA and the P site tRNA. Forms a bridge to the 30S subunit in the 70S ribosome.

This is one of the proteins that bind and probably mediate the attachment of the 5S RNA into the large ribosomal subunit, where it forms part of the central protuberance. In the 70S ribosome it contacts protein S13 of the 30S subunit (bridge B1b), connecting the 2 subunits; this bridge is implicated in subunit movement. Contacts the P site tRNA; the 5S rRNA and some of its associated proteins might help stabilize positioning of ribosome-bound tRNAs. This Halorhodospira halophila (strain DSM 244 / SL1) (Ectothiorhodospira halophila (strain DSM 244 / SL1)) protein is Large ribosomal subunit protein uL5.